Consider the following 382-residue polypeptide: MDNLFTFLHEIEDRYARTIFNFHLISCDEIGDIYGLMKERISSEDMFDNIVYNKDIHPAIKKLVYCDIQLTKHIINQNTYPVFNDSSQVKCCHYFDINSDNSNISSRTVEIFEREKSSLVSYIKTTNKKRKVNYGEIKKTVHGGTNANYFSGKKSDEYLSTTVRSNINQPWIKTISKRMRVDIINHSIVTRGKSSILQTIEIIFTNRTCVKIFKDSTMHIILSKDKDEKGCIHMIDKLFYVYYNLFLLFEDIIQNKYFNEVANIVNHVLTVTALDEKLFLIKKMAEHDVYGVSNFKIGMFNLTFIKSLDHTVFPSLLDEDSKIKFFKGKKLNIVALRSLDDCINYVTKSENMIEMMKERSTILNSIDIETESVDRLKELLLK.

It belongs to the poxviruses A23 family. Heterodimer of a 45 kDa and a 32 kDa subunit.

In terms of biological role, acts with RNA polymerase to initiate transcription from intermediate gene promoters. The sequence is that of Intermediate transcription factor 3 large subunit (VITF3L) from Ectromelia virus (strain Moscow) (ECTV).